Reading from the N-terminus, the 579-residue chain is Glypican-2 (579 aa).

The first 21 residues, 1-21 (MSALRPLLLLLLHLCPGLGPG), serve as a signal peptide directing secretion. Residues serine 55, serine 92, and serine 155 are each glycosylated (O-linked (Xyl...) (heparan sulfate) serine). Disordered stretches follow at residues 347–382 (GTPH…PTTA) and 483–552 (ALGQ…GRSR). Residues 361–379 (APREEASRSWRASAEEERP) are compositionally biased toward basic and acidic residues. Residues serine 498 and serine 500 are each glycosylated (O-linked (Xyl...) (heparan sulfate) serine). Over residues 517 to 527 (VVPPARPPRPP) the composition is skewed to pro residues. The GPI-anchor amidated serine moiety is linked to residue serine 556. The propeptide at 557 to 579 (SVGLHTPLVLLLLPSALTLLVLR) is removed in mature form.

It belongs to the glypican family. In terms of assembly, interacts (via heparan sulfate) with PTN; this interaction promotes neurite outgrowth through binding of PTN with chondroitin sulfate of proteoglycans, thereby releasing PTPRS of chondroitin sulfate proteoglycans (CSPGs) and leading to binding with heparan sulfate of GPC2. Interacts (heparan sulfate chain) with MDK; this interaction is inhibited by heparin followed by chondroitin sulfate E; this interaction induces GPC2 clustering through heparan sulfate chain; this interaction induces neuronal cell adhesion and neurite outgrowth.

The protein localises to the cell membrane. Its subcellular location is the secreted. It is found in the extracellular space. Its function is as follows. Cell surface proteoglycan that bears heparan sulfate. May fulfill a function related to the motile behaviors of developing neurons. The sequence is that of Glypican-2 (Gpc2) from Mus musculus (Mouse).